Here is a 262-residue protein sequence, read N- to C-terminus: Diaminopimelate epimerase (262 aa).

Substrate-binding residues include Asn-17, Gln-45, and Asn-63. Cys-72 serves as the catalytic Proton donor. Residues 73–74, Asn-154, Asn-187, and 205–206 contribute to the substrate site; these read GN and ER. Cys-214 acts as the Proton acceptor in catalysis. 215-216 lines the substrate pocket; it reads GS.

The protein belongs to the diaminopimelate epimerase family. In terms of assembly, homodimer.

It localises to the cytoplasm. The enzyme catalyses (2S,6S)-2,6-diaminopimelate = meso-2,6-diaminopimelate. It functions in the pathway amino-acid biosynthesis; L-lysine biosynthesis via DAP pathway; DL-2,6-diaminopimelate from LL-2,6-diaminopimelate: step 1/1. In terms of biological role, catalyzes the stereoinversion of LL-2,6-diaminopimelate (L,L-DAP) to meso-diaminopimelate (meso-DAP), a precursor of L-lysine and an essential component of the bacterial peptidoglycan. In Wolbachia sp. subsp. Drosophila simulans (strain wRi), this protein is Diaminopimelate epimerase.